Consider the following 367-residue polypeptide: Glycerol dehydrogenase (367 aa).

Asp37, Gly94, Lys95, Thr116, and Ser119 together coordinate NAD(+). Residue Asp121 participates in glycerol binding. NAD(+) contacts are provided by Ser125, Leu127, and Tyr131. Residues Asp171, His254, and His271 each coordinate Zn(2+). His254 provides a ligand contact to glycerol.

It belongs to the iron-containing alcohol dehydrogenase family. It depends on Zn(2+) as a cofactor.

The catalysed reaction is glycerol + NAD(+) = dihydroxyacetone + NADH + H(+). It functions in the pathway polyol metabolism; glycerol fermentation; glycerone phosphate from glycerol (oxidative route): step 1/2. Functionally, catalyzes the NAD-dependent oxidation of glycerol to dihydroxyacetone (glycerone). Allows microorganisms to utilize glycerol as a source of carbon under anaerobic conditions. This chain is Glycerol dehydrogenase (gldA), found in Escherichia coli O6:H1 (strain CFT073 / ATCC 700928 / UPEC).